A 37-amino-acid chain; its full sequence is Photosystem II reaction center protein T (37 aa).

A helical membrane pass occupies residues 3–23 (ALVYTFLLVSTLGIIFFAIFF).

This sequence belongs to the PsbT family. In terms of assembly, PSII is composed of 1 copy each of membrane proteins PsbA, PsbB, PsbC, PsbD, PsbE, PsbF, PsbH, PsbI, PsbJ, PsbK, PsbL, PsbM, PsbT, PsbY, PsbZ, Psb30/Ycf12, at least 3 peripheral proteins of the oxygen-evolving complex and a large number of cofactors. It forms dimeric complexes.

The protein localises to the plastid. Its subcellular location is the chloroplast thylakoid membrane. In terms of biological role, found at the monomer-monomer interface of the photosystem II (PS II) dimer, plays a role in assembly and dimerization of PSII. PSII is a light-driven water plastoquinone oxidoreductase, using light energy to abstract electrons from H(2)O, generating a proton gradient subsequently used for ATP formation. This chain is Photosystem II reaction center protein T, found in Cucumis sativus (Cucumber).